A 120-amino-acid polypeptide reads, in one-letter code: Small ribosomal subunit protein bS16 (120 aa).

The span at 84–110 (KREVKSNPEKAKPGKRAQERAAEKAQK) shows a compositional bias: basic and acidic residues. The disordered stretch occupies residues 84–120 (KREVKSNPEKAKPGKRAQERAAEKAQKAADAAAATAE). Residues 111–120 (AADAAAATAE) show a composition bias toward low complexity.

This sequence belongs to the bacterial ribosomal protein bS16 family.

The protein is Small ribosomal subunit protein bS16 of Rhizobium rhizogenes (strain K84 / ATCC BAA-868) (Agrobacterium radiobacter).